Consider the following 220-residue polypeptide: Adenylate kinase (220 aa).

ATP is bound at residue 10-15; sequence GAGKGT. The segment at 30 to 59 is NMP; sequence STGDMLRAAVKAGSPLGVEAKGYMDAGKLV. AMP contacts are provided by residues Thr31, Arg36, 57–59, 85–88, and Gln92; these read KLV and GFPR. The segment at 122-150 is disordered; that stretch reads GRRTHPASGRTYHVKFNPPKVEGKDDVTG. Positions 122–159 are LID; it reads GRRTHPASGRTYHVKFNPPKVEGKDDVTGEPLIQRDDD. ATP contacts are provided by residues Arg123 and 132-133; that span reads TY. Residues Arg156 and Arg167 each contribute to the AMP site. An ATP-binding site is contributed by Gly206.

Belongs to the adenylate kinase family. Monomer.

It is found in the cytoplasm. It carries out the reaction AMP + ATP = 2 ADP. Its pathway is purine metabolism; AMP biosynthesis via salvage pathway; AMP from ADP: step 1/1. In terms of biological role, catalyzes the reversible transfer of the terminal phosphate group between ATP and AMP. Plays an important role in cellular energy homeostasis and in adenine nucleotide metabolism. This chain is Adenylate kinase, found in Burkholderia ambifaria (strain MC40-6).